Reading from the N-terminus, the 231-residue chain is MSEFLNENPDILEENQLPTRKEDSTKDLLLGGFSNEATLERRSLLLKIDHSLKSQVLQDIEVLDKLLSIRIPPELTSDEDSLPAESEDESVAGGGKEEEEPDLIDAQEIYDLIAHISDPEHPLSLGQLSVVNLEDIDVHDSGNQNEMAEVVIKITPTITHCSLATLIGLGIRVRLERSLPPRFRITILLKKGTHDSENQVNKQLNDKERVAAACENEQLLGVVSKMLVTCK.

Disordered stretches follow at residues 1 to 26 and 75 to 100; these read MSEFLNENPDILEENQLPTRKEDSTK and LTSDEDSLPAESEDESVAGGGKEEEE. Ser2 carries the post-translational modification N-acetylserine. The span at 76 to 90 shows a compositional bias: acidic residues; that stretch reads TSDEDSLPAESEDES.

The protein belongs to the MIP18 family.

Its function is as follows. May play a role in chromosome segregation through establishment of sister chromatid cohesion. The chain is MIP18 family protein YHR122W from Saccharomyces cerevisiae (strain ATCC 204508 / S288c) (Baker's yeast).